The sequence spans 510 residues: GMP synthase [glutamine-hydrolyzing] (510 aa).

Positions 5–195 (LVIVVDFGGQ…LFDICNLKGD (191 aa)) constitute a Glutamine amidotransferase type-1 domain. Cysteine 82 serves as the catalytic Nucleophile. Catalysis depends on residues histidine 169 and glutamate 171. The 190-residue stretch at 196–385 (WSMSSFVDEK…LGIPHKLVWR (190 aa)) folds into the GMPS ATP-PPase domain. 223-229 (SGGVDSS) is an ATP binding site.

Homodimer.

It catalyses the reaction XMP + L-glutamine + ATP + H2O = GMP + L-glutamate + AMP + diphosphate + 2 H(+). The protein operates within purine metabolism; GMP biosynthesis; GMP from XMP (L-Gln route): step 1/1. In terms of biological role, catalyzes the synthesis of GMP from XMP. The polypeptide is GMP synthase [glutamine-hydrolyzing] (Clostridium kluyveri (strain NBRC 12016)).